The sequence spans 412 residues: Histone-lysine N-methyltransferase SUV39H1 (412 aa).

Residues 1–89 (MAENLKGCSV…LKCIRVLKQF (89 aa)) are interaction with SIRT1. The 59-residue stretch at 43–101 (FEVEYLCDYKKIREQEYYLVKWRGYPDSENTWEPRQNLKCIRVLKQFHKDLERELVRRH) folds into the Chromo domain. The 62-residue stretch at 179 to 240 (VGCECQDCLL…DCPNRVVQKG (62 aa)) folds into the Pre-SET domain. Zn(2+) contacts are provided by C181, C183, C186, C194, C195, C222, C226, C228, and C232. The 124-residue stretch at 243–366 (YDLCIFRTND…AGEELTFDYN (124 aa)) folds into the SET domain. 254 to 256 (RGW) serves as a coordination point for S-adenosyl-L-methionine. The interval 255 to 377 (GWGVRTLEKI…QVDPVDMEST (123 aa)) is mediates interaction with MECOM. An N6-acetyllysine modification is found at K266. Residues Y297 and 323-324 (NH) contribute to the S-adenosyl-L-methionine site. Position 326 (C326) interacts with Zn(2+). S391 is subject to Phosphoserine. One can recognise a Post-SET domain in the interval 396–412 (VRIECKCGTTACRKYLF). Positions 400, 402, and 407 each coordinate Zn(2+).

It belongs to the class V-like SAM-binding methyltransferase superfamily. Histone-lysine methyltransferase family. Suvar3-9 subfamily. In terms of assembly, interacts with CCAR2 and GFI1B. Component of the eNoSC complex, composed of SIRT1, SUV39H1 and RRP8. Interacts with H3 and H4 histones. Interacts with DNMT3B, CBX1, CBX4, MBD1, RUNX1, RUNX3, MYOD1, SMAD5 and RB1. Interacts with SBF1 through the SET domain. Interacts with HDAC1 and HDAC2 through the N-terminus and associates with the core histone deacetylase complex composed of HDAC1, HDAC2, RBBP4 and RBBP7. Interacts (via SET domain) with MECOM; enhances MECOM transcriptional repression activity. Interacts with LMNA; the interaction increases stability of SUV39H1. The large PER complex involved in the histone methylation is composed of at least PER2, CBX3, TRIM28, SUV39H1 and/or SUV39H2; CBX3 mediates the formation of the complex. In terms of processing, phosphorylated on serine residues, and to a lesser degree, on threonine residues. Acetylated at Lys-266, leading to inhibition of enzyme activity. SIRT1-mediated deacetylation relieves this inhibition. Post-translationally, ubiquitinated by the DCX(DCAF13) E3 ubiquitin ligase complex, leading to its degradation. As to expression, widely expressed.

Its subcellular location is the nucleus. The protein localises to the nucleus lamina. It is found in the nucleoplasm. The protein resides in the chromosome. It localises to the centromere. The catalysed reaction is L-lysyl(9)-[histone H3] + 3 S-adenosyl-L-methionine = N(6),N(6),N(6)-trimethyl-L-lysyl(9)-[histone H3] + 3 S-adenosyl-L-homocysteine + 3 H(+). Negatively regulated by CCAR2. Its function is as follows. Histone methyltransferase that specifically trimethylates 'Lys-9' of histone H3 using monomethylated H3 'Lys-9' as substrate. H3 'Lys-9' trimethylation represents a specific tag for epigenetic transcriptional repression by recruiting HP1 (CBX1, CBX3 and/or CBX5) proteins to methylated histones. Mainly functions in heterochromatin regions, thereby playing a central role in the establishment of constitutive heterochromatin at pericentric and telomere regions. H3 'Lys-9' trimethylation is also required to direct DNA methylation at pericentric repeats. SUV39H1 is targeted to histone H3 via its interaction with RB1 and is involved in many processes, such as repression of MYOD1-stimulated differentiation, regulation of the control switch for exiting the cell cycle and entering differentiation, repression by the PML-RARA fusion protein, BMP-induced repression, repression of switch recombination to IgA and regulation of telomere length. Component of the eNoSC (energy-dependent nucleolar silencing) complex, a complex that mediates silencing of rDNA in response to intracellular energy status and acts by recruiting histone-modifying enzymes. The eNoSC complex is able to sense the energy status of cell: upon glucose starvation, elevation of NAD(+)/NADP(+) ratio activates SIRT1, leading to histone H3 deacetylation followed by dimethylation of H3 at 'Lys-9' (H3K9me2) by SUV39H1 and the formation of silent chromatin in the rDNA locus. Recruited by the PER complex to the E-box elements of the circadian target genes such as PER2 itself or PER1, contributes to the conversion of local chromatin to a heterochromatin-like repressive state through H3 'Lys-9' trimethylation. The polypeptide is Histone-lysine N-methyltransferase SUV39H1 (Suv39h1) (Mus musculus (Mouse)).